The following is a 540-amino-acid chain: Solute carrier family 22 member 7 (540 aa).

A run of 12 helical transmembrane segments spans residues 21-41, 144-164, 172-192, 202-222, 232-252, 257-277, 344-364, 378-398, 402-422, 429-449, 462-484, and 488-510; these read LVLL…PIFM, VTST…GYLS, LLLV…ASVN, LTGS…LEWL, VIST…GYLI, WLLL…WWVP, VSLC…GLTL, LLFG…VRLV, LTEA…LLVS, ITAL…TAYL, TGMG…VVLL, and WLLL…VLLL.

Belongs to the major facilitator (TC 2.A.1) superfamily. Organic cation transporter (TC 2.A.1.19) family. As to expression, abundant expression in male and female kidney. In kidney, expressed at the brush border of the proximal tubule S3 segment (S3) in the outer stripe and medullary rays. In kidney, expression is higher in female than male. Also expressed in female liver.

It is found in the basolateral cell membrane. Its subcellular location is the apical cell membrane. It localises to the cell membrane. The catalysed reaction is orotate(out) + L-glutamate(in) = orotate(in) + L-glutamate(out). The enzyme catalyses 3',5'-cyclic GMP(in) = 3',5'-cyclic GMP(out). It catalyses the reaction GMP(in) = GMP(out). It carries out the reaction 2'-deoxyguanosine(in) = 2'-deoxyguanosine(out). The catalysed reaction is GDP(in) = GDP(out). The enzyme catalyses guanosine(in) = guanosine(out). It catalyses the reaction GTP(in) = GTP(out). It carries out the reaction 3',5'-cyclic AMP(in) = 3',5'-cyclic AMP(out). The catalysed reaction is creatinine(in) = creatinine(out). The enzyme catalyses prostaglandin E2(out) = prostaglandin E2(in). It catalyses the reaction 2-oxoglutarate(in) = 2-oxoglutarate(out). It carries out the reaction glutarate(in) = glutarate(out). The catalysed reaction is urate(out) = urate(in). The enzyme catalyses estrone 3-sulfate(out) = estrone 3-sulfate(in). In terms of biological role, functions as a Na(+)-independent bidirectional multispecific transporter. Contributes to the renal and hepatic elimination of endogenous organic compounds from the systemic circulation into the urine and bile, respectively. Capable of transporting a wide range of purine and pyrimidine nucleobases, nucleosides, and nucleotides with cGMP, 2'deoxyguanosine and GMP being the preferred substrates. Functions as a pH- and chloride-independent cGMP bidirectional facilitative transporter that can regulate both intracellular and extracellular levels of cGMP and may be involved in cGMP signaling pathways. Mediates orotate/glutamate bidirectional exchange and most likely display a physiological role in hepatic release of glutamate into the blood. Involved in renal secretion and possible reabsorption of creatinine. Able to uptake prostaglandin E2 (PGE2) and may contribute to PGE2 renal excretion. Also transports alpha-ketoglutarate and urate. Unlike human hortolog, able to transport glutarate. Apart from the orotate/glutamate exchange, the counterions for the uptake of other SLC22A7/OAT2 substrates remain to be identified. The protein is Solute carrier family 22 member 7 of Mus musculus (Mouse).